Reading from the N-terminus, the 315-residue chain is MHGHGGYDSDFSDDEQGGGSSKKRKKTVEDELLLTKPFQKERHGKVAHKQVAADLLDREEARNRRFHLIAMDAYQRHTKFVNDYILYYGGKREDFKRLGENDKTDLDVIRENHRFLWNEEDEADMTWEKRLAKKYYDKLFKEYCIADLSRYKENKFGFRWRIEKEVISGKGQFFCGNKCCNEKEGLRSWEVNFGYTEHGEKRNALVKLRLCQECSFKLNFHHRRKEIKSTKKKSKTTPECDESPRKKSRSPPSEEASKGKDEGHSSSKKSEDSRNRNAEEEDSASDSELWKGPLPETDEKSQEEEFDDYFQDLFL.

Met1 bears the N-acetylmethionine mark. A disordered region spans residues 1 to 28 (MHGHGGYDSDFSDDEQGGGSSKKRKKTV). A phosphoserine mark is found at Ser9 and Ser12. N6-acetyllysine is present on Lys36. The segment covering 225-235 (KEIKSTKKKSK) has biased composition (basic residues). Positions 225–308 (KEIKSTKKKS…EKSQEEEFDD (84 aa)) are disordered. Basic and acidic residues-rich tracts occupy residues 236 to 245 (TTPECDESPR) and 255 to 278 (EASK…NRNA). Ser283 and Ser285 each carry phosphoserine.

In terms of assembly, interacts with ESS2.

It is found in the nucleus. Its function is as follows. May be involved in pre-mRNA splicing. The sequence is that of Protein FRA10AC1 homolog (Fra10ac1) from Mus musculus (Mouse).